A 402-amino-acid polypeptide reads, in one-letter code: Tryptophan--tRNA ligase, cytoplasmic (402 aa).

The short motif at 97–106 (PSSEALHLGH) is the 'HIGH' region element. The 'KMSKS' region signature appears at 280-284 (KMSAS).

Belongs to the class-I aminoacyl-tRNA synthetase family.

It is found in the cytoplasm. It localises to the cytosol. The catalysed reaction is tRNA(Trp) + L-tryptophan + ATP = L-tryptophyl-tRNA(Trp) + AMP + diphosphate + H(+). This Arabidopsis thaliana (Mouse-ear cress) protein is Tryptophan--tRNA ligase, cytoplasmic.